The following is a 56-amino-acid chain: Large ribosomal subunit protein bL32 (56 aa).

A disordered region spans residues 1 to 38 (MAVQQNKKSRSRRDMRRSHDALTTAAVSVDKTSGETHL). Residues 7-16 (KKSRSRRDMR) show a composition bias toward basic residues.

This sequence belongs to the bacterial ribosomal protein bL32 family.

In Histophilus somni (strain 129Pt) (Haemophilus somnus), this protein is Large ribosomal subunit protein bL32.